The chain runs to 397 residues: Phosphoglycerate kinase (397 aa).

Residues 21 to 23 (DFN), Arg-37, 60 to 63 (HLGR), Arg-119, and Arg-152 each bind substrate. ATP is bound by residues Lys-203, Gly-294, Glu-325, and 354-357 (GGDS).

This sequence belongs to the phosphoglycerate kinase family. As to quaternary structure, monomer.

The protein localises to the cytoplasm. The enzyme catalyses (2R)-3-phosphoglycerate + ATP = (2R)-3-phospho-glyceroyl phosphate + ADP. The protein operates within carbohydrate degradation; glycolysis; pyruvate from D-glyceraldehyde 3-phosphate: step 2/5. The sequence is that of Phosphoglycerate kinase from Chlorobium phaeobacteroides (strain BS1).